We begin with the raw amino-acid sequence, 501 residues long: Dipeptide and tripeptide permease A (501 aa).

Topologically, residues 1–34 (MSTANNNQPESISMNAFKQPKAFYLIFSIELWER) are cytoplasmic. The helical transmembrane segment at 35–55 (FGYYGLQGIMAVYLVKMLGMS) threads the bilayer. Residues 56-59 (EADS) lie on the Periplasmic side of the membrane. The helical transmembrane segment at 60–80 (ITLFSSFSALVYGFVAIGGWL) threads the bilayer. Over 81 to 89 (GDKVLGAKR) the chain is Cytoplasmic. 2 consecutive transmembrane segments (helical) span residues 90–110 (VIVLGALTLAVGYSMIAYSGH) and 111–131 (EIFWVYLGMATIAVGNGLFKA). The Periplasmic portion of the chain corresponds to 132 to 153 (NPSSLLSTCYSKDDPRLDGAFT). The helical transmembrane segment at 154-174 (MYYMSINIGSFFSMLATPWLA) threads the bilayer. Topologically, residues 175–178 (AKYG) are cytoplasmic. A helical membrane pass occupies residues 179–199 (WSVAFSLSVVGMLITLVNFWF). The Periplasmic portion of the chain corresponds to 200–220 (CRKWVKNQGSKPDFLPLQFKK). Residues 221–241 (LLMVLVGIIALITLSNWLLHN) traverse the membrane as a helical segment. The Cytoplasmic segment spans residues 242–246 (QIIAR). A helical transmembrane segment spans residues 247-267 (WALALVSLGIIFIFTKETLFL). Residues 268-274 (QGIARRR) are Periplasmic-facing. Residues 275-295 (MIVAFLLMLEAVIFFVLYSQM) traverse the membrane as a helical segment. Over 296-320 (PTSLNFFAIHNVEHSIFGIGFEPEQ) the chain is Cytoplasmic. The helical transmembrane segment at 321-341 (FQALNPFWIMLASPILAAIYN) threads the bilayer. The Periplasmic portion of the chain corresponds to 342-352 (KMGDRLPMPHK). Residues 353–373 (FAFGMMLCSAAFLVLPWGASF) form a helical membrane-spanning segment. Topologically, residues 374-383 (ANEHGIVSVN) are cytoplasmic. Residues 384-404 (WLILSYALQSIGELMISGLGL) traverse the membrane as a helical segment. The Periplasmic segment spans residues 405–414 (AMVAQLVPQR). A helical transmembrane segment spans residues 415–435 (LMGFIMGSWFLTTAAAALIAG). Topologically, residues 436–460 (KVAALTAVPSDAITDAHASLAIYSH) are cytoplasmic. A helical transmembrane segment spans residues 461–481 (VFMQIGIVTAIIAVLMMLTAP). At 482-501 (KLYRMTLAPSDHNDVKIMTQ) the chain is on the periplasmic side.

Belongs to the major facilitator superfamily. Proton-dependent oligopeptide transporter (POT/PTR) (TC 2.A.17) family. DtpA subfamily.

Its subcellular location is the cell inner membrane. Functionally, proton-dependent permease that transports di- and tripeptides. This Yersinia pestis protein is Dipeptide and tripeptide permease A.